The primary structure comprises 522 residues: Glutamate--cysteine ligase, chloroplastic (522 aa).

Intrachain disulfides connect Cys-186-Cys-406 and Cys-349-Cys-364.

Belongs to the carboxylate-amine ligase family. Glutamate--cysteine ligase type 2 subfamily. As to quaternary structure, homodimer or monomer when oxidized or reduced, respectively. In terms of processing, the Cys-186-Cys-406 disulfide bridge is known to modulate the enzyme activity according to the redox status. The oxidized form constitutes the active enzyme. Abundant in leaves and roots. Expressed to a high level in leaf trichomes of mature plant.

It localises to the plastid. The protein resides in the chloroplast. The enzyme catalyses L-cysteine + L-glutamate + ATP = gamma-L-glutamyl-L-cysteine + ADP + phosphate + H(+). It functions in the pathway sulfur metabolism; glutathione biosynthesis; glutathione from L-cysteine and L-glutamate: step 1/2. Its activity is regulated as follows. Feedback inhibition by glutathione. Inhibited by buthionine sulfoximine and cystamine. Its function is as follows. Seems to play an important role in controlling the expression of resistance responses like the regulation of salicylic acid (SA) and phytoalexin (camalexin) production. Involved in resistance to fungal and bacterial pathogens. Required for the regulation of cell proliferation in root apical meristems through the GSH-dependent developmental pathway. Also participates in the detoxification process, the antioxidant response and is essential for embryo development and proper seed maturation. The protein is Glutamate--cysteine ligase, chloroplastic (GSH1) of Arabidopsis thaliana (Mouse-ear cress).